The chain runs to 343 residues: CRISPR-associated endonuclease Cas1 1 (343 aa).

Mn(2+) contacts are provided by E166, H234, and E249.

This sequence belongs to the CRISPR-associated endonuclease Cas1 family. In terms of assembly, homodimer, forms a heterotetramer with a Cas2 homodimer. Mg(2+) is required as a cofactor. It depends on Mn(2+) as a cofactor.

CRISPR (clustered regularly interspaced short palindromic repeat), is an adaptive immune system that provides protection against mobile genetic elements (viruses, transposable elements and conjugative plasmids). CRISPR clusters contain spacers, sequences complementary to antecedent mobile elements, and target invading nucleic acids. CRISPR clusters are transcribed and processed into CRISPR RNA (crRNA). Acts as a dsDNA endonuclease. Involved in the integration of spacer DNA into the CRISPR cassette. In Chlorobaculum tepidum (strain ATCC 49652 / DSM 12025 / NBRC 103806 / TLS) (Chlorobium tepidum), this protein is CRISPR-associated endonuclease Cas1 1.